We begin with the raw amino-acid sequence, 457 residues long: Cation efflux system protein CusC (457 aa).

Positions 1–17 (MSPCKLLPFCVALALTG) are cleaved as a signal peptide. Cys18 is lipidated: N-palmitoyl cysteine. Cys18 carries the S-diacylglycerol cysteine lipid modification.

This sequence belongs to the outer membrane factor (OMF) (TC 1.B.17) family. As to quaternary structure, homotrimer. Component of the cus efflux system composed of CusA, CusB, CusC and CusF.

It localises to the cell outer membrane. Its function is as follows. Forms pores that allow passive diffusion of cations across the outer membrane. Part of a cation efflux system that mediates resistance to copper and silver. In pathogenic strains it allows the bacteria to invade brain microvascular endothelial cells (BMEC) thus allowing it to cross the blood-brain barrier and cause neonatal meningitis. The sequence is that of Cation efflux system protein CusC (cusC) from Escherichia coli (strain K12).